The primary structure comprises 146 residues: DNA-binding protein Rv2175c (146 aa).

The tract at residues 1 to 27 (MPGRAPGSTLARVGSIPAGDDVLDPDE) is disordered. Thr-9 is modified (phosphothreonine).

Monomer in solution. May form homodimers. Interacts with phosphorylated PknL. In terms of processing, phosphorylated by PknL. Phosphorylation negatively regulates DNA-binding activity.

In terms of biological role, binds DNA at low salt concentrations. In Mycobacterium tuberculosis (strain ATCC 25618 / H37Rv), this protein is DNA-binding protein Rv2175c.